The sequence spans 248 residues: Large ribosomal subunit protein uL4 (248 aa).

2 disordered regions span residues 72 to 103 (RSEN…KSLN) and 173 to 210 (GRSV…RNLS). Positions 92 to 103 (PKAEKDQTKSLN) are enriched in basic and acidic residues. The segment covering 177 to 189 (RAGRGKTRGRKYS) has biased composition (basic residues).

Belongs to the universal ribosomal protein uL4 family. As to quaternary structure, part of the 50S ribosomal subunit.

Functionally, one of the primary rRNA binding proteins, this protein initially binds near the 5'-end of the 23S rRNA. It is important during the early stages of 50S assembly. It makes multiple contacts with different domains of the 23S rRNA in the assembled 50S subunit and ribosome. Forms part of the polypeptide exit tunnel. The chain is Large ribosomal subunit protein uL4 from Halorubrum lacusprofundi (strain ATCC 49239 / DSM 5036 / JCM 8891 / ACAM 34).